The chain runs to 85 residues: Large ribosomal subunit protein eL34 (85 aa).

The protein belongs to the eukaryotic ribosomal protein eL34 family.

The protein is Large ribosomal subunit protein eL34 of Saccharolobus islandicus (strain M.16.27) (Sulfolobus islandicus).